We begin with the raw amino-acid sequence, 636 residues long: Threonine--tRNA ligase (636 aa).

A TGS domain is found at 1–63 (MSSISIALPD…KDDSRVEIIT (63 aa)). Residues 243 to 534 (DHRRLGRELD…LIEHYAGNFP (292 aa)) are catalytic. 3 residues coordinate Zn(2+): cysteine 335, histidine 386, and histidine 511.

The protein belongs to the class-II aminoacyl-tRNA synthetase family. As to quaternary structure, homodimer. The cofactor is Zn(2+).

It localises to the cytoplasm. The enzyme catalyses tRNA(Thr) + L-threonine + ATP = L-threonyl-tRNA(Thr) + AMP + diphosphate + H(+). Functionally, catalyzes the attachment of threonine to tRNA(Thr) in a two-step reaction: L-threonine is first activated by ATP to form Thr-AMP and then transferred to the acceptor end of tRNA(Thr). Also edits incorrectly charged L-seryl-tRNA(Thr). In Pelobacter propionicus (strain DSM 2379 / NBRC 103807 / OttBd1), this protein is Threonine--tRNA ligase.